We begin with the raw amino-acid sequence, 187 residues long: UPF0301 protein CT0663 (187 aa).

This sequence belongs to the UPF0301 (AlgH) family.

In Chlorobaculum tepidum (strain ATCC 49652 / DSM 12025 / NBRC 103806 / TLS) (Chlorobium tepidum), this protein is UPF0301 protein CT0663.